The sequence spans 153 residues: MAPKADKKPAAKKPAEEEPATEKAEKAPAGKKPKAEKRLPAGKSAGKEGGEGKKGKKKAKKSVETYKIYIFKVLKQVHPDIGISSKAMSIMNSFINDIFEKLAAESAKLARYNKKPTVTSREIQTSVRLVLPGELAKHAVSEGTKAVTKFTSS.

Positions 1–28 are enriched in basic and acidic residues; sequence MAPKADKKPAAKKPAEEEPATEKAEKAP. Residues 1-60 form a disordered region; that stretch reads MAPKADKKPAAKKPAEEEPATEKAEKAPAGKKPKAEKRLPAGKSAGKEGGEGKKGKKKAK. N6-acetyllysine is present on residues lysine 7 and lysine 37. Residue lysine 149 forms a Glycyl lysine isopeptide (Lys-Gly) (interchain with G-Cter in ubiquitin) linkage.

This sequence belongs to the histone H2B family. As to quaternary structure, the nucleosome is a histone octamer containing two molecules each of H2A, H2B, H3 and H4 assembled in one H3-H4 heterotetramer and two H2A-H2B heterodimers. The octamer wraps approximately 147 bp of DNA. In terms of processing, can be acetylated to form H2BK6ac and H2BK33ac. Post-translationally, monoubiquitinated to form H2BK143ub1; may give a specific tag for epigenetic transcriptional activation.

Its subcellular location is the nucleus. The protein localises to the chromosome. Core component of nucleosome. Nucleosomes wrap and compact DNA into chromatin, limiting DNA accessibility to the cellular machineries which require DNA as a template. Histones thereby play a central role in transcription regulation, DNA repair, DNA replication and chromosomal stability. DNA accessibility is regulated via a complex set of post-translational modifications of histones, also called histone code, and nucleosome remodeling. This is Histone H2B.3 from Zea mays (Maize).